Reading from the N-terminus, the 573-residue chain is Amino-acid permease inda1 (573 aa).

Transmembrane regions (helical) follow at residues 72–92 (MIAI…GALA), 99–117 (LFVD…VYAL), 176–200 (ITTA…ALGY), 212–229 (LAAT…VLGG), 257–280 (GFCS…LAAA), 296–315 (VFWR…GLLI), 351–371 (FMNL…VYGG), 398–415 (LPSV…YVSL), 425–444 (WLLA…VCLA), 470–494 (VYGS…AIAA), and 511–527 (YLAA…GWLW).

Belongs to the amino acid-polyamine-organocation (APC) superfamily.

The protein resides in the membrane. In Hypocrea atroviridis (Trichoderma atroviride), this protein is Amino-acid permease inda1 (inda1).